A 33-amino-acid polypeptide reads, in one-letter code: Photosystem II reaction center protein Psb30 (33 aa).

Residues 5 to 25 (VIAQLASLALIIVLGPLVIGL) form a helical membrane-spanning segment.

Belongs to the Psb30/Ycf12 family. As to quaternary structure, PSII is composed of 1 copy each of membrane proteins PsbA, PsbB, PsbC, PsbD, PsbE, PsbF, PsbH, PsbI, PsbJ, PsbK, PsbL, PsbM, PsbT, PsbX, PsbY, PsbZ, Psb30/Ycf12, peripheral proteins of the oxygen-evolving complex and a large number of cofactors. It forms dimeric complexes.

The protein localises to the plastid. Its subcellular location is the chloroplast thylakoid membrane. In terms of biological role, a core subunit of photosystem II (PSII), probably helps stabilize the reaction center. The sequence is that of Photosystem II reaction center protein Psb30 from Chara vulgaris (Common stonewort).